Consider the following 211-residue polypeptide: Protein G12 (211 aa).

An N-terminal signal peptide occupies residues Met1–Cys19.

This is Protein G12 from Anopheles gambiae (African malaria mosquito).